Here is a 620-residue protein sequence, read N- to C-terminus: 1-deoxy-D-xylulose-5-phosphate synthase (620 aa).

Thiamine diphosphate contacts are provided by residues H80 and 121–123 (GHS). Residue D152 participates in Mg(2+) binding. Thiamine diphosphate-binding positions include 153–154 (GA), N181, Y288, and E370. Mg(2+) is bound at residue N181.

It belongs to the transketolase family. DXPS subfamily. Homodimer. It depends on Mg(2+) as a cofactor. Thiamine diphosphate serves as cofactor.

The enzyme catalyses D-glyceraldehyde 3-phosphate + pyruvate + H(+) = 1-deoxy-D-xylulose 5-phosphate + CO2. It functions in the pathway metabolic intermediate biosynthesis; 1-deoxy-D-xylulose 5-phosphate biosynthesis; 1-deoxy-D-xylulose 5-phosphate from D-glyceraldehyde 3-phosphate and pyruvate: step 1/1. Functionally, catalyzes the acyloin condensation reaction between C atoms 2 and 3 of pyruvate and glyceraldehyde 3-phosphate to yield 1-deoxy-D-xylulose-5-phosphate (DXP). This is 1-deoxy-D-xylulose-5-phosphate synthase from Klebsiella pneumoniae subsp. pneumoniae (strain ATCC 700721 / MGH 78578).